Reading from the N-terminus, the 201-residue chain is 3-isopropylmalate dehydratase small subunit (201 aa).

It belongs to the LeuD family. LeuD type 1 subfamily. Heterodimer of LeuC and LeuD.

The enzyme catalyses (2R,3S)-3-isopropylmalate = (2S)-2-isopropylmalate. It participates in amino-acid biosynthesis; L-leucine biosynthesis; L-leucine from 3-methyl-2-oxobutanoate: step 2/4. In terms of biological role, catalyzes the isomerization between 2-isopropylmalate and 3-isopropylmalate, via the formation of 2-isopropylmaleate. This is 3-isopropylmalate dehydratase small subunit from Brucella abortus (strain S19).